A 206-amino-acid polypeptide reads, in one-letter code: Insecticyanin-B (206 aa).

The first 17 residues, 1–17, serve as a signal peptide directing secretion; the sequence is MQRFLVFTIVAVATAAA. Cystine bridges form between C26-C136 and C60-C192.

Belongs to the calycin superfamily. Lipocalin family. Homotetramer. Synthesized only in the caterpillars, apparently by the epidermis and secreted into the hemolymph. The protein is passed over from the larval hemolymph to that of pupae and adults and is sequestered in the eggs.

It localises to the secreted. Its function is as follows. This protein binds a chromophore: biliverdin IX, isomer gamma. Mixed with lipoprotein-bound carotenes, this blue protein provides hornworms with their green cryptic coloration which serves a camouflage. The sequence is that of Insecticyanin-B (INSB) from Manduca sexta (Tobacco hawkmoth).